Reading from the N-terminus, the 321-residue chain is Eukaryotic translation initiation factor 3 subunit I (321 aa).

WD repeat units follow at residues 8-47 (GHER…RLGT), 50-89 (GHGG…TLSK), 140-179 (VDNS…KLIS), 182-221 (EHSK…HLKT), and 279-318 (GHFG…DDIE).

It belongs to the eIF-3 subunit I family. As to quaternary structure, component of the eukaryotic translation initiation factor 3 (eIF-3) complex.

It is found in the cytoplasm. Component of the eukaryotic translation initiation factor 3 (eIF-3) complex, which is involved in protein synthesis of a specialized repertoire of mRNAs and, together with other initiation factors, stimulates binding of mRNA and methionyl-tRNAi to the 40S ribosome. The eIF-3 complex specifically targets and initiates translation of a subset of mRNAs involved in cell proliferation. In Nematostella vectensis (Starlet sea anemone), this protein is Eukaryotic translation initiation factor 3 subunit I.